The chain runs to 162 residues: Cyclic pyranopterin monophosphate synthase (162 aa).

Residues 75–77 (MCH) and 115–116 (ME) contribute to the substrate site. The active site involves aspartate 130.

The protein belongs to the MoaC family. Homohexamer; trimer of dimers.

It carries out the reaction (8S)-3',8-cyclo-7,8-dihydroguanosine 5'-triphosphate = cyclic pyranopterin phosphate + diphosphate. Its pathway is cofactor biosynthesis; molybdopterin biosynthesis. Functionally, catalyzes the conversion of (8S)-3',8-cyclo-7,8-dihydroguanosine 5'-triphosphate to cyclic pyranopterin monophosphate (cPMP). This Geobacillus thermodenitrificans (strain NG80-2) protein is Cyclic pyranopterin monophosphate synthase.